The primary structure comprises 396 residues: Decapping nuclease RAI1 (396 aa).

Residue Tyr107 to Gly109 coordinates substrate. Position 179 (Glu179) interacts with a divalent metal cation. Glu228 provides a ligand contact to substrate. A divalent metal cation is bound by residues Asp230, Glu249, and Leu250. Lys251 and Gln275 together coordinate substrate.

The protein belongs to the DXO/Dom3Z family. Interacts with RAT1; the interaction is direct, stabilizes RAT1 protein structure and stimulates its exoribonuclease activity. The interaction also stimulates RAI1 pyrophosphohydrolase activity, probably by recruiting it to mRNA substrates. It depends on a divalent metal cation as a cofactor.

It is found in the nucleus. The enzyme catalyses a 5'-end NAD(+)-phospho-ribonucleoside in mRNA + H2O = a 5'-end phospho-ribonucleoside in mRNA + NAD(+) + H(+). The catalysed reaction is a 5'-end (N(7)-methyl 5'-triphosphoguanosine)-ribonucleoside-ribonucleotide in mRNA + H2O = a (N(7)-methyl 5'-triphosphoguanosine)-nucleoside + a 5'-end phospho-ribonucleoside in mRNA + H(+). It catalyses the reaction a 5'-end triphospho-ribonucleoside in mRNA + H2O = a 5'-end phospho-ribonucleoside in mRNA + diphosphate + H(+). Decapping enzyme for NAD-capped RNAs: specifically hydrolyzes the nicotinamide adenine dinucleotide (NAD) cap from a subset of RNAs by removing the entire NAD moiety from the 5'-end of an NAD-capped RNA. The NAD-cap is present at the 5'-end of some RNAs and snoRNAs. In contrast to the canonical 5'-end N7 methylguanosine (m7G) cap, the NAD cap promotes mRNA decay. Also acts as a non-canonical decapping enzyme that removes the entire cap structure of m7G capped or incompletely capped RNAs. Has decapping activity toward incomplete 5'-end m7G cap mRNAs such as unmethylated 5'-end-capped RNA (cap0), while it has no activity toward 2'-O-ribose methylated m7G cap (cap1). Also possesses RNA 5'-pyrophosphohydrolase activity by hydrolyzing the 5'-end triphosphate to release pyrophosphates. Stimulates exoribonuclease activity of Rat1, allowing it to degrade RNAs with stable secondary structure more effectively. In Scheffersomyces stipitis (strain ATCC 58785 / CBS 6054 / NBRC 10063 / NRRL Y-11545) (Yeast), this protein is Decapping nuclease RAI1.